The sequence spans 291 residues: Neugrin (291 aa).

The first 15 residues, 1-15 (MAVTLSLLLSGRVCA), serve as a signal peptide directing secretion. A disordered region spans residues 27 to 49 (VADPGPIGREPDPDSDWEPEERE). Residues 39-49 (PDSDWEPEERE) are compositionally biased toward acidic residues. S41 is subject to Phosphoserine. An N-linked (GlcNAc...) asparagine glycan is attached at N158. The tract at residues 224–270 (VAAPLGHPRELQKYSSDSESPRRTGNGALPSDQKLEELKAEEPGNFS) is disordered. Residues 256–265 (QKLEELKAEE) show a composition bias toward basic and acidic residues.

The protein belongs to the neugrin family. As to quaternary structure, forms a regulatory protein-RNA complex, consisting of RCC1L, NGRN, RPUSD3, RPUSD4, TRUB2, FASTKD2 and 16S mt-rRNA. Interacts with 16S mt-rRNA; this interaction is direct.

The protein localises to the nucleus. It is found in the secreted. The protein resides in the mitochondrion membrane. Plays an essential role in mitochondrial ribosome biogenesis. As a component of a functional protein-RNA module, consisting of RCC1L, NGRN, RPUSD3, RPUSD4, TRUB2, FASTKD2 and 16S mitochondrial ribosomal RNA (16S mt-rRNA), controls 16S mt-rRNA abundance and is required for intra-mitochondrial translation of core subunits of the oxidative phosphorylation system. This is Neugrin (NGRN) from Pongo abelii (Sumatran orangutan).